The following is a 204-amino-acid chain: Large ribosomal subunit protein eL15 (204 aa).

Belongs to the eukaryotic ribosomal protein eL15 family. In terms of assembly, component of the large ribosomal subunit.

The protein localises to the cytoplasm. Its function is as follows. Component of the large ribosomal subunit. The ribosome is a large ribonucleoprotein complex responsible for the synthesis of proteins in the cell. The polypeptide is Large ribosomal subunit protein eL15 (rpl15) (Monopterus albus (Swamp eel)).